Here is a 198-residue protein sequence, read N- to C-terminus: Peroxiredoxin-2F, mitochondrial (198 aa).

The transit peptide at 1 to 27 (MASALLRKATVGGSAAAAAARWASRGL) directs the protein to the mitochondrion. The region spanning 34–198 (SDIVSAAPGV…SGAEVILDQI (165 aa)) is the Thioredoxin domain. Cys86 acts as the Cysteine sulfenic acid (-SOH) intermediate in catalysis.

Belongs to the peroxiredoxin family. Prx5 subfamily. Monomer.

The protein localises to the mitochondrion matrix. The enzyme catalyses [glutaredoxin]-dithiol + a hydroperoxide = [glutaredoxin]-disulfide + an alcohol + H2O. Its function is as follows. Thiol-specific peroxidase that catalyzes the reduction of hydrogen peroxide and organic hydroperoxides to water and alcohols, respectively. Plays a role in cell protection against oxidative stress by detoxifying peroxides. Reduces preferentially hydrogen peroxide rather than alkyl peroxides. May be involved in mitochondrial redox homeostasis. The chain is Peroxiredoxin-2F, mitochondrial (PRXIIF) from Oryza sativa subsp. japonica (Rice).